The following is a 1544-amino-acid chain: Protein mahjong (1544 aa).

Positions 1–110 are disordered; it reads MSEGSGSENA…AAADRRQATK (110 aa). A compositionally biased stretch (low complexity) spans 10–35; sequence AAAAEAAAEAEAATEAALMAEAVAVA. Acidic residues predominate over residues 38 to 91; sequence SDEEEQPEAEDMPEQAGDNQEEDAAEQQDGGEPEADEDADADDAMSVENAENES. Phosphoserine occurs at positions 565 and 569. In terms of domain architecture, LisH spans 912-944; that stretch reads NKQQLYQLIFEHLESNGLSQTAQMLQREVGLPL. 2 disordered regions span residues 946 to 973 and 987 to 1059; these read TPTT…SRNR and GNGD…LAED. S955 is modified (phosphoserine). The span at 961–971 shows a compositional bias: low complexity; the sequence is SLPSGSSSLSR. Over residues 1016 to 1027 the composition is skewed to polar residues; that stretch reads PNFSSLNTTQTP. 2 short sequence motifs (DWD box) span residues 1302–1309 and 1338–1345; these read VLWDVRSG and EVWDLRTF. 2 disordered regions span residues 1447-1475 and 1487-1544; these read KSER…ENTF and LRNL…SSDD. Acidic residues-rich tracts occupy residues 1451–1467 and 1495–1535; these read SEEE…EDGS and NDDE…DVLE.

This sequence belongs to the VPRBP/DCAF1 family. As to quaternary structure, component of the CUL4-RBX1-DDB1-DCAF1 E3 ubiquitin-protein ligase complex. Interacts with l(2)gl.

It is found in the nucleus. It functions in the pathway protein modification; protein ubiquitination. Probable substrate recognition component of tsome E3 ubiquitin-protein ligase complex. Plays a key role in cell competition via its interaction with l(2)gl. The sequence is that of Protein mahjong (mahj) from Drosophila melanogaster (Fruit fly).